Here is a 496-residue protein sequence, read N- to C-terminus: MAGEITETGELYSPYVGLVYMFNLIVGTGALTMPKAFATAGWLVSLVLLVFVGFMSFVTTTFAMEAMAAANAQLRWKRMETHKEEDDEDSSTASDSDLLSQDNYERAEKRPILSVQRRSSANLFEITDRVEMGQMASMFFNKVGVNLFYFCIITYLYGDLAIYAAAVPVSLMQVTCSVSGNDSCGVDTDARYNDTDLCWGPLRRVDVYRIYLAIFTVLLGPFTFFDVQKTKYLQILTSMMRWIAFAIMIVLALVRIGKGQGEGHPPLANFLGVQNLFGVCVYSFMCQHSLPSLITPISSKRHITRLLFLDYALILAFYGLLSFTAIFCFRGDSLMDMYTLNFARCDVVGLAAVRFFLGLFPVFTISTNFPIIAVTLRNNWKTLFHREGGTYPWVVDRVVFPTITLVPPILVAFCTHDLESLVAITGAYAGTGIQYVIPAFLVYLCRKDTQLTFGYGTVNKHRSPFRHTFWVAFVLLWAFSCFFFVTAYIVLKETQL.

The Cytoplasmic portion of the chain corresponds to 1–10 (MAGEITETGE). The chain crosses the membrane as a helical span at residues 11–31 (LYSPYVGLVYMFNLIVGTGAL). At 32–36 (TMPKA) the chain is on the extracellular side. Residues 37–57 (FATAGWLVSLVLLVFVGFMSF) traverse the membrane as a helical segment. Over 58 to 146 (VTTTFAMEAM…SMFFNKVGVN (89 aa)) the chain is Cytoplasmic. The segment at 81–100 (THKEEDDEDSSTASDSDLLS) is disordered. The span at 91–100 (STASDSDLLS) shows a compositional bias: low complexity. A helical transmembrane segment spans residues 147–167 (LFYFCIITYLYGDLAIYAAAV). The Extracellular portion of the chain corresponds to 168 to 204 (PVSLMQVTCSVSGNDSCGVDTDARYNDTDLCWGPLRR). Asn193 is a glycosylation site (N-linked (GlcNAc...) asparagine). The chain crosses the membrane as a helical span at residues 205–225 (VDVYRIYLAIFTVLLGPFTFF). The Cytoplasmic portion of the chain corresponds to 226 to 233 (DVQKTKYL). The chain crosses the membrane as a helical span at residues 234 to 254 (QILTSMMRWIAFAIMIVLALV). The Extracellular portion of the chain corresponds to 255-265 (RIGKGQGEGHP). Residues 266–286 (PLANFLGVQNLFGVCVYSFMC) form a helical membrane-spanning segment. Over 287-306 (QHSLPSLITPISSKRHITRL) the chain is Cytoplasmic. The helical transmembrane segment at 307 to 327 (LFLDYALILAFYGLLSFTAIF) threads the bilayer. Over 328–354 (CFRGDSLMDMYTLNFARCDVVGLAAVR) the chain is Extracellular. The helical transmembrane segment at 355–375 (FFLGLFPVFTISTNFPIIAVT) threads the bilayer. Topologically, residues 376 to 397 (LRNNWKTLFHREGGTYPWVVDR) are cytoplasmic. Residues 398–418 (VVFPTITLVPPILVAFCTHDL) form a helical membrane-spanning segment. The Extracellular segment spans residues 419 to 421 (ESL). Residues 422–442 (VAITGAYAGTGIQYVIPAFLV) traverse the membrane as a helical segment. Residues 443 to 470 (YLCRKDTQLTFGYGTVNKHRSPFRHTFW) lie on the Cytoplasmic side of the membrane. A helical transmembrane segment spans residues 471–491 (VAFVLLWAFSCFFFVTAYIVL). Residues 492 to 496 (KETQL) are Extracellular-facing.

Belongs to the TMEM104 family.

It localises to the membrane. The chain is Transmembrane protein 104 (Tmem104) from Mus musculus (Mouse).